Here is a 370-residue protein sequence, read N- to C-terminus: MDVSMTTGIELTEELSVLNGLTEITRFAGVGTAVSETSYSQTELLDILDVEDPKIRSVFLNSAIDRRFLTLPPENPGGGRLAEPQGDLLDKHKKIAVDMGCRALEACLKSAGATLSDLRHLCCVTSTGFLTPGLSALIIREMGIDPHCSRSDIVGMGCNAGLNALNVVSGWSAAHPGELGVVLCSEACSAAYALDGTMRTAVVNSLFGDGSAALAVISGDGRVAGPRVLKFASYIITDAVDAMRYDWDRDQDRFSFFLDPQIPYVVGAHAEIVVDRLLSGTGLRRSDIGHWLVHSGGKKVVDAVVVNLGLSRHDVRHTTGVLRDYGNLSSGSFLFSYERLSEEDVTRPGDYGVLMTMGPGSTIEMALIQW.

The active site involves cysteine 158.

Belongs to the thiolase-like superfamily. Chalcone/stilbene synthases family.

The enzyme catalyses 4 malonyl-CoA + 4 H(+) = (3,5-dihydroxyphenyl)acetyl-CoA + 4 CO2 + 3 CoA + H2O. The protein operates within antibiotic biosynthesis; vancomycin biosynthesis. Its function is as follows. Involved in the biosynthesis of the nonproteinogenic amino acid monomer (S)-3,5-dihydroxyphenylglycine (Dpg) responsible of the production of vancomycin and teicoplanin antibiotics. Catalyzes the Claisen condensation of four molecules of malonyl-CoA to yield 3,5-dihydroxyphenylacetyl-CoA (DPA-CoA) and three free coenzyme A (CoA). DpgA requires the presence of the dehydratases DpgB and DpgD to facilitate the aromatization of the DPA-S-DgpA or DPA-S-CoA intermediate. The sequence is that of 3,5-dihydroxyphenylacetyl-CoA synthase (dpgA) from Amycolatopsis orientalis (Nocardia orientalis).